Here is a 476-residue protein sequence, read N- to C-terminus: Aspartyl/glutamyl-tRNA(Asn/Gln) amidotransferase subunit B (476 aa).

This sequence belongs to the GatB/GatE family. GatB subfamily. In terms of assembly, heterotrimer of A, B and C subunits.

The enzyme catalyses L-glutamyl-tRNA(Gln) + L-glutamine + ATP + H2O = L-glutaminyl-tRNA(Gln) + L-glutamate + ADP + phosphate + H(+). The catalysed reaction is L-aspartyl-tRNA(Asn) + L-glutamine + ATP + H2O = L-asparaginyl-tRNA(Asn) + L-glutamate + ADP + phosphate + 2 H(+). Functionally, allows the formation of correctly charged Asn-tRNA(Asn) or Gln-tRNA(Gln) through the transamidation of misacylated Asp-tRNA(Asn) or Glu-tRNA(Gln) in organisms which lack either or both of asparaginyl-tRNA or glutaminyl-tRNA synthetases. The reaction takes place in the presence of glutamine and ATP through an activated phospho-Asp-tRNA(Asn) or phospho-Glu-tRNA(Gln). This Clostridium botulinum (strain 657 / Type Ba4) protein is Aspartyl/glutamyl-tRNA(Asn/Gln) amidotransferase subunit B.